The chain runs to 509 residues: Glycogen synthase (509 aa).

Residue K47 coordinates ADP-alpha-D-glucose.

It belongs to the glycosyltransferase 1 family. Bacterial/plant glycogen synthase subfamily.

The enzyme catalyses [(1-&gt;4)-alpha-D-glucosyl](n) + ADP-alpha-D-glucose = [(1-&gt;4)-alpha-D-glucosyl](n+1) + ADP + H(+). The protein operates within glycan biosynthesis; glycogen biosynthesis. In terms of biological role, synthesizes alpha-1,4-glucan chains using ADP-glucose. The polypeptide is Glycogen synthase (Xanthomonas euvesicatoria pv. vesicatoria (strain 85-10) (Xanthomonas campestris pv. vesicatoria)).